Reading from the N-terminus, the 438-residue chain is Probable chaperone protein ClpB 1 (438 aa).

The stretch at 1–94 forms a coiled coil; it reads MNTADTRQRL…NNRKIEARQA (94 aa). The linker stretch occupies residues 1 to 118; the sequence is MNTADTRQRL…IADIVSRWTG (118 aa). The segment at 128–345 is NBD2; sequence ERQKLLGIES…RIDEVILFTP (218 aa). 178–185 contacts ATP; sequence GPTGVGKT. The interval 346-438 is C-terminal; the sequence is LTRENLREIV…ENDAIVMKKK (93 aa).

Belongs to the ClpA/ClpB family. In terms of assembly, homohexamer. The oligomerization is ATP-dependent.

It is found in the cytoplasm. Part of a stress-induced multi-chaperone system, it is involved in the recovery of the cell from heat-induced damage, in cooperation with DnaK, DnaJ and GrpE. Acts before DnaK, in the processing of protein aggregates. Protein binding stimulates the ATPase activity; ATP hydrolysis unfolds the denatured protein aggregates, which probably helps expose new hydrophobic binding sites on the surface of ClpB-bound aggregates, contributing to the solubilization and refolding of denatured protein aggregates by DnaK. In Chlorobaculum tepidum (strain ATCC 49652 / DSM 12025 / NBRC 103806 / TLS) (Chlorobium tepidum), this protein is Probable chaperone protein ClpB 1 (clpB1).